The chain runs to 192 residues: uncharacterized protein (192 aa).

Residues 7–29 (FIHSISGGSSLLSASEVFASAFF) traverse the membrane as a helical; Signal-anchor segment. A helical transmembrane segment spans residues 51–67 (YFLCVLVSTFLNSLVII).

It localises to the membrane. This is an uncharacterized protein from Saccharomyces cerevisiae (strain ATCC 204508 / S288c) (Baker's yeast).